A 755-amino-acid polypeptide reads, in one-letter code: uncharacterized protein (755 aa).

Disordered regions lie at residues 1-44 (MAAP…AAAQ), 72-91 (AEHS…ATAQ), 99-174 (FSLS…IPHY), 393-467 (TTNV…SSSR), 523-545 (LPKT…EGGG), 584-672 (VSSS…LPSG), and 734-755 (QAAT…PRRK). 2 stretches are compositionally biased toward low complexity: residues 10–25 (TTTQ…TTTT) and 35–44 (TTTGSGAAAQ). Composition is skewed to low complexity over residues 112–130 (ISSS…NASS), 139–151 (SPDL…LSGS), and 393–412 (TTNV…TKST). Over residues 429 to 446 (IEEDTIQFDDPGQGEDDN) the composition is skewed to acidic residues. Residues 452–462 (NTPPPPGPPPN) are compositionally biased toward pro residues. The segment covering 536-545 (ATGGVTEGGG) has biased composition (gly residues). Residues 590–599 (LPQPQVATTI) show a composition bias toward polar residues. Composition is skewed to low complexity over residues 600 to 666 (TPQA…QTPQ) and 740 to 755 (SQPS…PRRK).

The protein belongs to the chlamydial CPn_0572/CT_456/TC_0741 family.

This is an uncharacterized protein from Chlamydia pneumoniae (Chlamydophila pneumoniae).